The primary structure comprises 235 residues: Rab-like protein 3 (235 aa).

Residues 1-235 (MASLDRVKVL…GGNFKSLHYD (235 aa)) form a small GTPase-like region. GTP is bound by residues 16–21 (GVGKSS), 148–150 (KLD), and 179–180 (DC).

The protein belongs to the small GTPase superfamily. Rab family. Homodimer.

Required for KRAS signaling regulation and modulation of cell proliferation. Regulator of KRAS prenylation, and probably prenylation of other small GTPases. Required for lymphocyte development and function. Not required for myeloid cell development. This Xenopus tropicalis (Western clawed frog) protein is Rab-like protein 3 (rabl3).